The primary structure comprises 212 residues: External core antigen (212 aa).

Residues 1-19 (MQLFHLCLIISCSCPTVQA) form the signal peptide. Residues 25–27 (GWL) form an HBEAG region. Residues 165 to 212 (NAPILSTLPETTVVRRRGRSPRRRTPSPRRRRSQSPRRRRSQSRESQC) form a disordered region. Over residues 178–205 (VRRRGRSPRRRTPSPRRRRSQSPRRRRS) the composition is skewed to basic residues. One copy of the 1; half-length repeat lies at 184 to 190 (SPRRRTP). A 3 X 8 AA repeats of S-P-R-R-R-R-S-Q region spans residues 184 to 206 (SPRRRTPSPRRRRSQSPRRRRSQ). Positions 184-212 (SPRRRTPSPRRRRSQSPRRRRSQSRESQC) are excised as a propeptide. 2 repeat units span residues 191 to 198 (SPRRRRSQ) and 199 to 206 (SPRRRRSQ).

The protein belongs to the orthohepadnavirus precore antigen family. As to quaternary structure, homodimerizes. Post-translationally, phosphorylated. In terms of processing, cleaved by host furin.

The protein localises to the secreted. Its subcellular location is the host nucleus. Functionally, may regulate immune response to the intracellular capsid in acting as a T-cell tolerogen, by having an immunoregulatory effect which prevents destruction of infected cells by cytotoxic T-cells. This immune regulation may predispose to chronicity during perinatal infections and prevent severe liver injury during adult infections. This Hepatitis B virus genotype C subtype ayw (isolate China/Tibet127/2002) (HBV-C) protein is External core antigen.